The sequence spans 599 residues: Interleukin-18 receptor accessory protein (599 aa).

The N-terminal stretch at 1–19 (MLCLGWIFLWLVAGERIKG) is a signal peptide. The Extracellular segment spans residues 20–356 (FNISGCSTKK…TQSVQLKEKR (337 aa)). 3 N-linked (GlcNAc...) asparagine glycosylation sites follow: N21, N119, and N152. Cysteines 46 and 126 form a disulfide. 2 consecutive Ig-like C2-type domains span residues 149 to 235 (PQTN…WTVR) and 251 to 353 (PDIL…VQLK). Disulfide bonds link C155–C180, C175–C221, C180–C221, and C273–C337. N-linked (GlcNAc...) asparagine glycosylation occurs at N345. A helical transmembrane segment spans residues 357–377 (GVVLLYILLGTIGTLVAVLAA). At 378–599 (SALLYRHWIE…TGRSSQPKEW (222 aa)) the chain is on the cytoplasmic side. One can recognise a TIR domain in the interval 406-559 (KDFDAFVSYA…RFWAKMRYHM (154 aa)). Residue E493 is part of the active site.

This sequence belongs to the interleukin-1 receptor family. In terms of assembly, forms a ternary complex with IL18 and IL18R1. Within this complex, IL18R1 is involved in ligand-binding and IL18RAP in signaling leading to NF-kappa-B and JNK activation. In terms of processing, N-glycosylated. In terms of tissue distribution, detected in adrenal gland, bone marrow, brain, fetal brain, fetal liver, heart, kidney, lung, liver, peripheral blood leukocytes, placenta, prostate, salivary gland, skeletal muscle, spinal cord, testis, thymus, thyroid, trachea and uterus. Strongly expressed in peripheral blood leukocytes and spleen and, to a lesser extent, in colon. Specifically coexpressed with IL18R1 in T-helper 1 (Th1)cells.

Its subcellular location is the cell membrane. It catalyses the reaction NAD(+) + H2O = ADP-D-ribose + nicotinamide + H(+). Its function is as follows. Within the IL18 receptor complex, does not mediate IL18-binding, but involved in IL18-dependent signal transduction, leading to NF-kappa-B and JNK activation. May play a role in IL18-mediated IFNG synthesis from T-helper 1 (Th1) cells. In Homo sapiens (Human), this protein is Interleukin-18 receptor accessory protein.